The chain runs to 1402 residues: DNA-directed RNA polymerase subunit beta' (1402 aa).

Residues cysteine 71, cysteine 73, cysteine 86, and cysteine 89 each contribute to the Zn(2+) site. Residues aspartate 462, aspartate 464, and aspartate 466 each coordinate Mg(2+). Positions 811, 885, 892, and 895 each coordinate Zn(2+).

Belongs to the RNA polymerase beta' chain family. In terms of assembly, the RNAP catalytic core consists of 2 alpha, 1 beta, 1 beta' and 1 omega subunit. When a sigma factor is associated with the core the holoenzyme is formed, which can initiate transcription. Mg(2+) is required as a cofactor. It depends on Zn(2+) as a cofactor.

The catalysed reaction is RNA(n) + a ribonucleoside 5'-triphosphate = RNA(n+1) + diphosphate. Its function is as follows. DNA-dependent RNA polymerase catalyzes the transcription of DNA into RNA using the four ribonucleoside triphosphates as substrates. The polypeptide is DNA-directed RNA polymerase subunit beta' (Bartonella henselae (strain ATCC 49882 / DSM 28221 / CCUG 30454 / Houston 1) (Rochalimaea henselae)).